The following is a 331-amino-acid chain: Ribosomal RNA small subunit methyltransferase H (331 aa).

S-adenosyl-L-methionine is bound by residues 49–51 (GGH), D68, L102, D116, and Q123.

It belongs to the methyltransferase superfamily. RsmH family.

Its subcellular location is the cytoplasm. The catalysed reaction is cytidine(1402) in 16S rRNA + S-adenosyl-L-methionine = N(4)-methylcytidine(1402) in 16S rRNA + S-adenosyl-L-homocysteine + H(+). In terms of biological role, specifically methylates the N4 position of cytidine in position 1402 (C1402) of 16S rRNA. In Renibacterium salmoninarum (strain ATCC 33209 / DSM 20767 / JCM 11484 / NBRC 15589 / NCIMB 2235), this protein is Ribosomal RNA small subunit methyltransferase H.